Reading from the N-terminus, the 129-residue chain is Glycine cleavage system H protein (129 aa).

One can recognise a Lipoyl-binding domain in the interval 24–106 (SYTVGISEHA…FGDGWFFRVM (83 aa)). Position 65 is an N6-lipoyllysine (K65).

The protein belongs to the GcvH family. In terms of assembly, the glycine cleavage system is composed of four proteins: P, T, L and H. Requires (R)-lipoate as cofactor.

Functionally, the glycine cleavage system catalyzes the degradation of glycine. The H protein shuttles the methylamine group of glycine from the P protein to the T protein. The chain is Glycine cleavage system H protein from Shewanella halifaxensis (strain HAW-EB4).